A 187-amino-acid polypeptide reads, in one-letter code: Capsid protein VP10 (187 aa).

Cysteine 45 and cysteine 51 are joined by a disulfide.

It is found in the virion. Functionally, VP10 self-assembles, together with capsid protein VP4, to form an icosahedral caspid of 87 nm in diameter, with a T=43 symmetry and composed of 420 hexamers and 12 pentamers. VP4 proteins arrange into hexons, while VP10 proteins form the pentameric densities located at the 5-fold axes in the virion. The stoichiometry of VP4:VP10 is 42:1. This is Capsid protein VP10 from Sulfolobus polyhedral virus 1 (SPV1).